The following is a 78-amino-acid chain: DNA-directed RNA polymerase subunit Rpo5 (78 aa).

This sequence belongs to the archaeal Rpo5/eukaryotic RPB5 RNA polymerase subunit family. Part of the RNA polymerase complex.

It is found in the cytoplasm. It carries out the reaction RNA(n) + a ribonucleoside 5'-triphosphate = RNA(n+1) + diphosphate. In terms of biological role, DNA-dependent RNA polymerase (RNAP) catalyzes the transcription of DNA into RNA using the four ribonucleoside triphosphates as substrates. This chain is DNA-directed RNA polymerase subunit Rpo5, found in Methanothrix thermoacetophila (strain DSM 6194 / JCM 14653 / NBRC 101360 / PT) (Methanosaeta thermophila).